The primary structure comprises 107 residues: uncharacterized protein (107 aa).

This is an uncharacterized protein from Acidianus sp. F28 (AFV-2).